Reading from the N-terminus, the 394-residue chain is Thioredoxin-interacting protein (394 aa).

Lysine 212 is covalently cross-linked (Glycyl lysine isopeptide (Lys-Gly) (interchain with G-Cter in ubiquitin)). A Phosphoserine modification is found at serine 361.

It belongs to the arrestin family. Homodimer; disulfide-linked. Interacts with TXN/thioredoxin through its redox-active site. Interacts with transcriptional repressors ZBTB16, ZBTB32 and HDAC1. Interacts with DDIT4. Post-translationally, ubiquitinated; undergoes heterotypic 'Lys-48'-/'Lys-63'-branched polyubiquitination catalyzed by ITCH and UBR5 resulting in proteasomal degradation. Deubiquitinated by USP5, leading to TXNIP stabilization.

The protein localises to the cytoplasm. May act as an oxidative stress mediator by inhibiting thioredoxin activity or by limiting its bioavailability. Interacts with COPS5 and restores COPS5-induced suppression of CDKN1B stability, blocking the COPS5-mediated translocation of CDKN1B from the nucleus to the cytoplasm. Functions as a transcriptional repressor, possibly by acting as a bridge molecule between transcription factors and corepressor complexes, and over-expression will induce G0/G1 cell cycle arrest. Required for the maturation of natural killer cells. Acts as a suppressor of tumor cell growth. Inhibits the proteasomal degradation of DDIT4, and thereby contributes to the inhibition of the mammalian target of rapamycin complex 1 (mTORC1). In Rattus norvegicus (Rat), this protein is Thioredoxin-interacting protein (Txnip).